Consider the following 107-residue polypeptide: uncharacterized protein (107 aa).

This is an uncharacterized protein from Schizosaccharomyces pombe (strain 972 / ATCC 24843) (Fission yeast).